A 916-amino-acid polypeptide reads, in one-letter code: Protein translocase subunit SecA (916 aa).

Residues Gln-87, 105 to 109 (GEGKT), and Asp-512 each bind ATP. The interval 857–916 (QHAEAPSMEQAVAGEEEELPEGPAPVVPLEPVRNEQKIGRNEPCPCGSGKKYKHCHGQLD) is disordered. Zn(2+)-binding residues include Cys-900, Cys-902, Cys-911, and His-912. Residues 906-916 (KKYKHCHGQLD) are compositionally biased toward basic residues.

The protein belongs to the SecA family. In terms of assembly, monomer and homodimer. Part of the essential Sec protein translocation apparatus which comprises SecA, SecYEG and auxiliary proteins SecDF-YajC and YidC. Requires Zn(2+) as cofactor.

Its subcellular location is the cell inner membrane. The protein resides in the cytoplasm. It catalyses the reaction ATP + H2O + cellular proteinSide 1 = ADP + phosphate + cellular proteinSide 2.. Its function is as follows. Part of the Sec protein translocase complex. Interacts with the SecYEG preprotein conducting channel. Has a central role in coupling the hydrolysis of ATP to the transfer of proteins into and across the cell membrane, serving both as a receptor for the preprotein-SecB complex and as an ATP-driven molecular motor driving the stepwise translocation of polypeptide chains across the membrane. This Pseudomonas aeruginosa (strain LESB58) protein is Protein translocase subunit SecA.